The primary structure comprises 194 residues: Large ribosomal subunit protein bL17 (194 aa).

The disordered stretch occupies residues 126-194; that stretch reads AEPKQTKART…SPEQTNKQEE (69 aa). Residues 131 to 140 are compositionally biased toward basic residues; sequence TKARTRRGKG. 2 stretches are compositionally biased toward polar residues: residues 144–161 and 181–194; these read ATTTVSSEKTQPNTQDMA and LDTQSPEQTNKQEE.

This sequence belongs to the bacterial ribosomal protein bL17 family. In terms of assembly, part of the 50S ribosomal subunit. Contacts protein L32.

The chain is Large ribosomal subunit protein bL17 from Amoebophilus asiaticus (strain 5a2).